Consider the following 462-residue polypeptide: Sensor histidine kinase ZraS (462 aa).

Topologically, residues 1–14 are cytoplasmic; sequence MNVMRLSKDSVAVG. A helical transmembrane segment spans residues 15-35; sequence LSWLLTGLILLLVCLFSALIV. The Periplasmic portion of the chain corresponds to 36-197; it reads RDYGRENEAA…ADHARGLRNM (162 aa). The chain crosses the membrane as a helical span at residues 198-218; that stretch reads VIMLCAAGVVMAATVLAQFWF. At 219–462 the chain is on the cytoplasmic side; it reads RRYQRSRKQL…VNGQQKDEQG (244 aa). The Histidine kinase domain occupies 247–455; the sequence is GVAHEIRNPL…LFTFYLPVNG (209 aa). Phosphohistidine; by autocatalysis is present on histidine 250.

In terms of processing, autophosphorylated.

Its subcellular location is the cell inner membrane. It carries out the reaction ATP + protein L-histidine = ADP + protein N-phospho-L-histidine.. Activity of the ZraS/ZraR two-component system is repressed by the zinc-bound form of ZraP, which probably interacts with the periplasmic region of ZraS. Its function is as follows. Part of the Zra signaling pathway, an envelope stress response (ESR) system composed of the periplasmic accessory protein ZraP, the histidine kinase ZraS and the transcriptional regulator ZraR. The ZraPSR system contributes to antibiotic resistance and is important for membrane integrity in the presence of membrane-targeting biocides. ZraS is a member of the two-component regulatory system ZraS/ZraR. Functions as a membrane-associated sensor kinase that phosphorylates ZraR in response to high concentrations of Zn(2+) or Pb(2+) in the medium. This is Sensor histidine kinase ZraS (zraS) from Klebsiella oxytoca.